We begin with the raw amino-acid sequence, 210 residues long: ATP-dependent dethiobiotin synthetase BioD (210 aa).

13-18 (DVGKTV) serves as a coordination point for ATP. Position 17 (Thr17) interacts with Mg(2+). Residue Lys33 is part of the active site. 2 residues coordinate Mg(2+): Arg47 and Glu101. ATP-binding positions include 101–104 (EGAG) and 185–187 (PPL).

The protein belongs to the dethiobiotin synthetase family. As to quaternary structure, homodimer. Mg(2+) is required as a cofactor.

The protein resides in the cytoplasm. It carries out the reaction (7R,8S)-7,8-diammoniononanoate + CO2 + ATP = (4R,5S)-dethiobiotin + ADP + phosphate + 3 H(+). Its pathway is cofactor biosynthesis; biotin biosynthesis; biotin from 7,8-diaminononanoate: step 1/2. Its function is as follows. Catalyzes a mechanistically unusual reaction, the ATP-dependent insertion of CO2 between the N7 and N8 nitrogen atoms of 7,8-diaminopelargonic acid (DAPA, also called 7,8-diammoniononanoate) to form a ureido ring. In Afipia carboxidovorans (strain ATCC 49405 / DSM 1227 / KCTC 32145 / OM5) (Oligotropha carboxidovorans), this protein is ATP-dependent dethiobiotin synthetase BioD.